The primary structure comprises 288 residues: Glucose-1-phosphate thymidylyltransferase (288 aa).

Gly8 serves as a coordination point for dTDP-alpha-D-glucose. The dTTP site is built by Gly8, Gly11, Thr12, Arg13, Lys23, Gln24, Gln80, Gly85, and Asp108. Residues Lys23, Gln24, Gln80, Gly85, Asp108, Asn109, Gly143, Glu158, Lys159, Val169, and Asp222 each contribute to the dTDP-alpha-D-glucose site. Residue Asp108 participates in Mg(2+) binding. Position 222 (Asp222) interacts with Mg(2+).

It belongs to the glucose-1-phosphate thymidylyltransferase family. Requires Mg(2+) as cofactor.

The catalysed reaction is dTTP + alpha-D-glucose 1-phosphate + H(+) = dTDP-alpha-D-glucose + diphosphate. It functions in the pathway carbohydrate biosynthesis; dTDP-L-rhamnose biosynthesis. Its function is as follows. Catalyzes the conversion of glucose-1-phosphate and dTTP to dTDP-glucose and pyrophosphate. Involved in the biosynthesis of the dTDP-L-rhamnose which is a component of the critical linker, D-N-acetylglucosamine-L-rhamnose disaccharide, which connects the galactan region of arabinogalactan to peptidoglycan via a phosphodiester linkage. This Mycobacterium tuberculosis (strain CDC 1551 / Oshkosh) protein is Glucose-1-phosphate thymidylyltransferase (rmlA).